A 171-amino-acid polypeptide reads, in one-letter code: AP-3 complex subunit sigma (171 aa).

The protein belongs to the adaptor complexes small subunit family. As to quaternary structure, adaptor protein complex 3 (AP-3) is a heterotetramer composed of two large adaptins (delta-type subunit and beta-type subunit), a medium adaptin (mu-type subunit) and a small adaptin (sigma-type subunit).

It is found in the endosome membrane. Part of the AP-3 complex, an adaptor-related complex which is essential for the compartmentalization of the endocytic pathway. The chain is AP-3 complex subunit sigma (ap3s1) from Dictyostelium discoideum (Social amoeba).